We begin with the raw amino-acid sequence, 240 residues long: NAD(P)H-quinone oxidoreductase subunit K (240 aa).

4 residues coordinate [4Fe-4S] cluster: Cys-55, Cys-56, Cys-120, and Cys-151.

Belongs to the complex I 20 kDa subunit family. As to quaternary structure, NDH-1 can be composed of about 15 different subunits; different subcomplexes with different compositions have been identified which probably have different functions. Requires [4Fe-4S] cluster as cofactor.

It is found in the cellular thylakoid membrane. It carries out the reaction a plastoquinone + NADH + (n+1) H(+)(in) = a plastoquinol + NAD(+) + n H(+)(out). It catalyses the reaction a plastoquinone + NADPH + (n+1) H(+)(in) = a plastoquinol + NADP(+) + n H(+)(out). NDH-1 shuttles electrons from an unknown electron donor, via FMN and iron-sulfur (Fe-S) centers, to quinones in the respiratory and/or the photosynthetic chain. The immediate electron acceptor for the enzyme in this species is believed to be plastoquinone. Couples the redox reaction to proton translocation, and thus conserves the redox energy in a proton gradient. Cyanobacterial NDH-1 also plays a role in inorganic carbon-concentration. The polypeptide is NAD(P)H-quinone oxidoreductase subunit K (Trichodesmium erythraeum (strain IMS101)).